Reading from the N-terminus, the 156-residue chain is Arginine repressor (156 aa).

The protein belongs to the ArgR family.

Its subcellular location is the cytoplasm. It functions in the pathway amino-acid biosynthesis; L-arginine biosynthesis [regulation]. Regulates arginine biosynthesis genes. This chain is Arginine repressor, found in Shewanella piezotolerans (strain WP3 / JCM 13877).